Reading from the N-terminus, the 1701-residue chain is MKIIFFLCSFLFFIINTQCVTHESYQELVKKLEALEDAVLTGYSLFQKEKMVLNEGTSGTAVTTSTPGSSGSVTSGGSVASVASVASGGSGGSVASGGSGNSRRTNPSDNSSDSNTKTYADLKHRVQNYLFTIKELKYPELFDLTNHMLTLSKNVDGFKYLIDGYEEINELLYKLNFYYDLLRAKLNDACANSYCQIPFNLKIRANELDVLKKIVFGYRKPLDNIKDNVGKMEDYIKKNKTTIANINELIEGSKKTIDQNKNADNEEGKKKLYQAQYNLFIYNKQLQEAHNLISVLEKRIDTLKKNENIKKLLEDIDKIKTDAENPTTGSKPNPLPENKKKEVEGHEEKIKEIAKTIKFNIDSLFTDPLELEYYLREKNKKVDVTPKSQDPTKSVQIPKVPYPNGIVYPLPLTDIHNSLAADNDKNSYGDLMNPDTKEKINEKIITDNKERKIFINNIKKQIDLEEKNINHTKEQNKKLLEDYEKSKKDYEELLEKFYEMKFNNNFDKDVVDKIFSARYTYNVEKQRYNNKFSSSNNSVYNVQKLKKALSYLEDYSLRKGISEKDFNHYYTLKTGLEADIKKLTEEIKSSENKILEKNFKGLTHSANASLEVSDIVKLQVQKVLLIKKIEDLRKIELFLKNAQLKDSIHVPNIYKPQNKPEPYYLIVLKKEVDKLKEFIPKVKDMLKKEQAVLSSITQPLVAASETTEDGGHSTHTLSQSGETEVTEETEVTEETVGHTTTVTITLPPKEESAPKEVKVVENSIEHKSNDNSQALTKTVYLKKLDEFLTKSYICHKYILVSNSSMDQKLLEVYNLTPEEENELKSCDPLDLLFNIQNNIPAMYSLYDSMNNDLQHLFFELYQKEMIYYLHKLKEENHIKKLLEEQKQITGTSSTSSPGNTTVNTAQSATHSNSQNQQSNASSTNTQNGVAVSSGPAVVEESHDPLTVLSISNDLKGIVSLLNLGNKTKVPNPLTISTTEMEKFYENILKNNDTYFNDDIKQFVKSNSKVITGLTETQKNALNDEIKKLKDTLQLSFDLYNKYKLKLDRLFNKKKELGQDKMQIKKLTLLKEQLESKLNSLNNPHNVLQNFSVFFNKKKEAEIAETENTLENTKILLKHYKGLVKYYNGESSPLKTLSEVSIQTEDNYANLEKFRALSKIDGKLNDNLHLGKKKLSFLSSGLHHLITELKEVIKNKNYTGNSPSENNKKVNEALKSYENFLPEAKVTTVVTPPQPDVTPSPLSVRVSGSSGSTKEETQIPTSGSLLTELQQVVQLQNYDEEDDSLVVLPIFGESEDNDEYLDQVVTGEAISVTMDNILSGFENEYDVIYLKPLAGVYRSLKKQIEKNIITFNLNLNDILNSRLKKRKYFLDVLESDLMQFKHISSNEYIIEDSFKLLNSEQKNTLLKSYKYIKESVENDIKFAQEGISYYEKVLAKYKDDLESIKKVIKEEKEKFPSSPPTTPPSPAKTDEQKKESKFLPFLTNIETLYNNLVNKIDDYLINLKAKINDCNVEKDEAHVKITKLSDLKAIDDKIDLFKNTNDFEAIKKLINDDTKKDMLGKLLSTGLVQNFPNTIISKLIEGKFQDMLNISQHQCVKKQCPENSGCFRHLDEREECKCLLNYKQEGDKCVENPNPTCNENNGGCDADATCTEEDSGSSRKKITCECTKPDSYPLFDGIFCSSSNFLGISFLLILMLILYSFI.

The first 19 residues, 1 to 19 (MKIIFFLCSFLFFIINTQC), serve as a signal peptide directing secretion. The segment covering 89–100 (GSGGSVASGGSG) has biased composition (gly residues). Residues 89 to 118 (GSGGSVASGGSGNSRRTNPSDNSSDSNTKT) are disordered. The segment covering 101–116 (NSRRTNPSDNSSDSNT) has biased composition (low complexity). N110 and N239 each carry an N-linked (GlcNAc...) asparagine glycan. Residues 322-344 (DAENPTTGSKPNPLPENKKKEVE) form a disordered region. N-linked (GlcNAc...) asparagine glycans are attached at residues N470, N536, and N607. Residues 704-739 (SETTEDGGHSTHTLSQSGETEVTEETEVTEETVGHT) form a disordered region. The span at 724–733 (EVTEETEVTE) shows a compositional bias: acidic residues. Residues N802, N899, N919, N965, N991, N1089, and N1196 are each glycosylated (N-linked (GlcNAc...) asparagine). Residues 889-927 (TGTSSTSSPGNTTVNTAQSATHSNSQNQQSNASSTNTQN) show a composition bias toward low complexity. The disordered stretch occupies residues 889–936 (TGTSSTSSPGNTTVNTAQSATHSNSQNQQSNASSTNTQNGVAVSSGPA). Disordered regions lie at residues 1230–1259 (TPPQ…TQIP) and 1451–1472 (KEKF…DEQK). Positions 1245-1259 (VSGSSGSTKEETQIP) are enriched in polar residues. Residues 1456 to 1465 (SSPPTTPPSP) are compositionally biased toward pro residues. Residue N1588 is glycosylated (N-linked (GlcNAc...) asparagine). EGF-like domains follow at residues 1592-1632 (HQCV…VENP) and 1633-1680 (NPTC…IFCS). Cystine bridges form between C1594–C1605, C1599–C1615, C1617–C1628, C1636–C1649, C1643–C1663, and C1665–C1679. S1680 carries the GPI-anchor amidated serine lipid modification. The propeptide at 1681–1701 (SSNFLGISFLLILMLILYSFI) is removed in mature form.

Forms a complex composed of subunits p83, p30, p38, and p42 which remain non-covalently associated; the complex is formed at the merozoite surface prior to egress from host erythrocytes. Forms a complex composed of processed MSP1 subunits, MSP6 subunit p36 and MSP7; the complex is formed at the merozoite surface prior to egress from host erythrocytes. Within the complex, interacts (via subunit p38) with MSP6 subunit p36 and (via subunits p83, p30 and p38) with MSP7 (via subunit p22). Forms a complex composed of MSP1, MSP6, DBLMSP1 and DBLMSP2. Within the complex, interacts (via subunit p38) with DBLMSP1 and DBLMSP2. Forms a complex composed of MSP1, and rhoptry proteins RhopH3, RAP1 and CLAG9/RhopH3. Within the complex, interacts (via subunits p42 and p19) with RhopH3 (via C-terminus). Forms a complex composed of MSP1, MSP6, MSP7, MSP9 and MSP3; within the complex, MSP6 and MSP9 mediate the binding to the host erythrocyte. Interacts (via subunits p19 and p42) with MSP9; the interaction is direct; MSP1 subunits p19 or p42, and MSP9 form a co-ligand complex that interacts with host SLC4A1/Band 3 protein. May interact with PFD6. Interacts with host spectrin. As to quaternary structure, interacts with host glycophorin GYPA in a sialic acid-independent manner. In terms of assembly, interacts with host proinflammatory cytokine S100P; the interaction blocks S100P inflammatory and chemotactic activities. Interacts with host SLC4A1/Band 3 (via 5ABC region) on the host erythrocyte surface in a sialic acid-independent manner. In terms of processing, the p190 precursor is cleaved by SUB1 prior to merozoite egress into 4 subunits p83, p30, p38, and p42 which remain non-covalently associated. SUB1-mediated proteolytic cleavage occurs in an orderly manner; the first cleavage occurs at the p30/p38 site, followed by cleavage at the p83/p30 site, the last cleavage occurs at the p38/p42 site. The order of cleavage is essential for parasite viability. SUB1-mediated processing is essential for merozoite egress. In a second processing step during erythrocyte invasion, p42 is cleaved by SUB2 into p33 and p19; the latter remains attached to the merozoite surface via its GPI-anchor and is endocytosed during the subsequent ring stage.

The protein localises to the cell membrane. It localises to the secreted. The protein resides in the vacuole membrane. In terms of biological role, during the asexual blood stage, involved in merozoite egress from host erythrocytes possibly via its interaction with the host cytoskeleton protein spectrin resulting in the destabilization of the host cytoskeleton and thus leading to erythrocyte cell membrane rupture. Involved in the binding to host erythrocytes and is required for host erythrocyte invasion. Functionally, by binding to host proinflammatory cytokine S100P may interfere with host immune responses. Involved in merozoite invasion of host erythrocytes. May play a role in the biogenesis and/or function of the food vacuole during the intraerythrocytic development. The polypeptide is Merozoite surface protein 1 (Plasmodium falciparum (isolate mad20 / Papua New Guinea)).